The sequence spans 325 residues: Secreted RxLR effector protein RXLR-C07 (325 aa).

An N-terminal signal peptide occupies residues 1–19; that stretch reads MQGVRITILWCIVLATIYA. 5 TPR repeats span residues 37 to 75, 92 to 125, 134 to 167, 218 to 251, and 260 to 293; these read RGLR…GEER, AQIL…IEKI, GLSL…VKKG, AELY…FLQR, and AFSL…AVSI. A RxLR-dEER motif is present at residues 37–75; that stretch reads RGLRNAGMKANDERMFKDAIEKLRHAISLLHNRVFGEER.

Belongs to the RxLR effector family.

It is found in the secreted. Its subcellular location is the host cytoplasm. The protein localises to the host nucleus. The protein resides in the host nucleolus. In terms of biological role, secreted effector that suppresses pattern-triggered immunity (PTI) in plant host. This is Secreted RxLR effector protein RXLR-C07 from Plasmopara halstedii (Downy mildew of sunflower).